The sequence spans 400 residues: Nucleoside permease NupC (400 aa).

The Cytoplasmic segment spans residues 1-3 (MDR). The chain crosses the membrane as a helical span at residues 4-24 (VLHFVLALAVVAILALLVSSD). Residues 25–36 (RKKIRIRYVIQL) are Periplasmic-facing. A helical membrane pass occupies residues 37 to 57 (LVIEVLLAWFFLNSDVGLGFV). The Cytoplasmic portion of the chain corresponds to 58–86 (KGFSEMFEKLLGFANEGTNFVFGSMNDQG). A helical transmembrane segment spans residues 87-107 (LAFFFLKVLCPIVFISALIGI). Residues 108–168 (LQHIRVLPVI…GKISRNRMYT (61 aa)) are Periplasmic-facing. A helical transmembrane segment spans residues 169–189 (MAATAMSTVSMSIVGAYMTML). Residues 190 to 192 (EPK) are Cytoplasmic-facing. The chain crosses the membrane as a helical span at residues 193-213 (YVVAALVLNMFSTFIVLSLIN). Residues 214 to 250 (PYRVDASEENIQMSNLHEGQSFFEMLGEYILAGFKVA) are Periplasmic-facing. A helical transmembrane segment spans residues 251–271 (IIVAAMLIGFIALIAALNALF). At 272–281 (ATVTGWFGYS) the chain is on the cytoplasmic side. The chain crosses the membrane as a helical span at residues 282-302 (ISFQGILGYIFYPIAWVMGVP). Residues 303-341 (SSEALQVGSIMATKLVSNEFVAMMDLQKIASTLSPRAEG) are Periplasmic-facing. A helical transmembrane segment spans residues 342 to 362 (IISVFLVSFANFSSIGIIAGA). Topologically, residues 363–378 (VKGLNEEQGNVVSRFG) are cytoplasmic. Residues 379–399 (LKLVYGSTLVSVLSASIAALV) form a helical membrane-spanning segment. Leu400 is a topological domain (periplasmic).

It belongs to the concentrative nucleoside transporter (CNT) (TC 2.A.41) family.

It is found in the cell inner membrane. The enzyme catalyses adenosine(in) + H(+)(in) = adenosine(out) + H(+)(out). The catalysed reaction is uridine(in) + H(+)(in) = uridine(out) + H(+)(out). It catalyses the reaction thymidine(in) + H(+)(in) = thymidine(out) + H(+)(out). It carries out the reaction cytidine(in) + H(+)(in) = cytidine(out) + H(+)(out). The enzyme catalyses 2'-deoxycytidine(in) + H(+)(in) = 2'-deoxycytidine(out) + H(+)(out). Transport is inhibited by the proton uncoupler dinitrophenol. Inhibited by the nucleoside antibiotic showdomycin. Nucleoside transport protein that can transport adenosine, uridine, thymidine, cytidine and deoxycytidine. Shows weak activity with inosine and xanthosine. Transport is driven by a proton motive force. Does not transport guanosine, deoxyguanosine, hypoxanthine or uracil. Also shows activity with the chemotherapeutic drugs 3'-azido-3'-deoxythymidine (AZT), 2',3'- dideoxycytidine (ddC) and 2'-deoxy-2',2'-difluorocytidine (gemcitabine). The protein is Nucleoside permease NupC of Escherichia coli (strain K12).